Reading from the N-terminus, the 846-residue chain is Aminopeptidase N (846 aa).

Substrate contacts are provided by residues Glu120 and 252–256; that span reads GAMEN. His288 is a binding site for Zn(2+). The active-site Proton acceptor is the Glu289. Residues His292 and Glu311 each contribute to the Zn(2+) site.

It belongs to the peptidase M1 family. Monomer. The cofactor is Zn(2+).

The protein resides in the cytoplasm. The catalysed reaction is Release of an N-terminal amino acid, Xaa-|-Yaa- from a peptide, amide or arylamide. Xaa is preferably Ala, but may be most amino acids including Pro (slow action). When a terminal hydrophobic residue is followed by a prolyl residue, the two may be released as an intact Xaa-Pro dipeptide.. Aminopeptidase with broad substrate specificity to several peptides. It has more affinity for oligopeptides than for dipeptides. It plays an essential role in the metabolism, it may be involved in nitrogen supply or protein turnover. This is Aminopeptidase N (pepN) from Lactococcus lactis subsp. cremoris (strain MG1363).